The primary structure comprises 84 residues: Cell division topological specificity factor (84 aa).

The protein belongs to the MinE family.

Functionally, prevents the cell division inhibition by proteins MinC and MinD at internal division sites while permitting inhibition at polar sites. This ensures cell division at the proper site by restricting the formation of a division septum at the midpoint of the long axis of the cell. This chain is Cell division topological specificity factor, found in Rhodopseudomonas palustris (strain BisA53).